We begin with the raw amino-acid sequence, 195 residues long: Inner membrane-spanning protein YciB (195 aa).

The next 5 helical transmembrane spans lie at 34-54 (IYGA…ALWL), 65-85 (FTLG…EDTF), 88-108 (WKAP…HFIG), 131-151 (LNIA…YVVF), and 160-180 (FKVF…GIFL).

The protein belongs to the YciB family.

It is found in the cell inner membrane. In terms of biological role, plays a role in cell envelope biogenesis, maintenance of cell envelope integrity and membrane homeostasis. The polypeptide is Inner membrane-spanning protein YciB (Pseudomonas paraeruginosa (strain DSM 24068 / PA7) (Pseudomonas aeruginosa (strain PA7))).